The following is a 326-amino-acid chain: Tryptophan--tRNA ligase (326 aa).

ATP-binding positions include 11-13 (QPT) and 19-20 (GN). Positions 12–20 (PTGQIHLGN) match the 'HIGH' region motif. An L-tryptophan-binding site is contributed by Asp135. Residues 147-149 (GED), Val186, and 195-199 (KMSKS) contribute to the ATP site. Residues 195–199 (KMSKS) carry the 'KMSKS' region motif.

It belongs to the class-I aminoacyl-tRNA synthetase family. In terms of assembly, homodimer.

Its subcellular location is the cytoplasm. The enzyme catalyses tRNA(Trp) + L-tryptophan + ATP = L-tryptophyl-tRNA(Trp) + AMP + diphosphate + H(+). In terms of biological role, catalyzes the attachment of tryptophan to tRNA(Trp). The chain is Tryptophan--tRNA ligase from Helicobacter pylori (strain J99 / ATCC 700824) (Campylobacter pylori J99).